The sequence spans 259 residues: Insulin-induced gene 1 protein (259 aa).

Topologically, residues M1–L66 are cytoplasmic. The interval P36–C55 is disordered. Residues V67 to I89 traverse the membrane as a helical segment. The Extracellular segment spans residues Q90–A108. A helical membrane pass occupies residues W109 to Y126. At P127–R141 the chain is on the cytoplasmic side. Glycyl lysine isopeptide (Lys-Gly) (interchain with G-Cter in ubiquitin) cross-links involve residues K138 and K140. The chain crosses the membrane as a helical span at residues E142–D164. At F165–N167 the chain is on the extracellular side. The helical transmembrane segment at N168 to F186 threads the bilayer. The Cytoplasmic segment spans residues D187 to S191. S189 is modified (phosphoserine). The chain crosses the membrane as a helical span at residues G192–N213. At G214–R227 the chain is on the extracellular side. Residues S228–G245 form a helical membrane-spanning segment. At R246–D259 the chain is on the cytoplasmic side. The KxHxx motif lies at P253–D259.

This sequence belongs to the INSIG family. As to quaternary structure, interacts with SCAP; interaction is direct and only takes place in the presence of sterols; it prevents interaction between SCAP and the coat protein complex II (COPII). Associates with the SCAP-SREBP complex (composed of SCAP and SREBF1/SREBP1 or SREBF2/SREBP2); association is mediated via its interaction with SCAP and only takes place in the presence of sterols. Interaction with SCAP is mutually exclusive with PAQR3. Interacts with HMGCR (via its SSD); the interaction, accelerated by sterols, leads to the recruitment of HMGCR to AMFR/gp78 for its ubiquitination by the sterol-mediated ERAD pathway. Interacts with AMFR/gp78 (via its membrane domain); the interaction recruits HMCR at the ER membrane for its ubiquitination and degradation by the sterol-mediated ERAD pathway. Interacts with SOAT2/ACAT2; leading to promote recruitment of AMFR/gp78 and subsequent ubiquitination of SOAT2/ACAT2. Interacts with RNF139. Interacts with RNF145. Phosphorylation at Ser-189 by PCK1 reduces binding to oxysterol, disrupting the interaction between INSIG1 and SCAP, thereby promoting nuclear translocation of SREBP proteins (SREBF1/SREBP1 or SREBF2/SREBP2) and subsequent transcription of downstream lipogenesis-related genes. Post-translationally, ubiquitinated by AMFR/gp78 in response to sterol deprivation, leading to its degradation: when the SCAP-SREBP complex becomes dissociated from INSIG1, INSIG1 is then ubiquitinated and degraded in proteasomes. Although ubiquitination is required for rapid INSIG1 degradation, it is not required for release of the SCAP-SREBP complex. Ubiquitinated by RNF139.

The protein localises to the endoplasmic reticulum membrane. In terms of biological role, oxysterol-binding protein that mediates feedback control of cholesterol synthesis by controlling both endoplasmic reticulum to Golgi transport of SCAP and degradation of HMGCR. Acts as a negative regulator of cholesterol biosynthesis by mediating the retention of the SCAP-SREBP complex in the endoplasmic reticulum, thereby blocking the processing of sterol regulatory element-binding proteins (SREBPs) SREBF1/SREBP1 and SREBF2/SREBP2. Binds oxysterol, including 25-hydroxycholesterol, regulating interaction with SCAP and retention of the SCAP-SREBP complex in the endoplasmic reticulum. In presence of oxysterol, interacts with SCAP, retaining the SCAP-SREBP complex in the endoplasmic reticulum, thereby preventing SCAP from escorting SREBF1/SREBP1 and SREBF2/SREBP2 to the Golgi. Sterol deprivation or phosphorylation by PCK1 reduce oxysterol-binding, disrupting the interaction between INSIG1 and SCAP, thereby promoting Golgi transport of the SCAP-SREBP complex, followed by processing and nuclear translocation of SREBF1/SREBP1 and SREBF2/SREBP2. Also regulates cholesterol synthesis by regulating degradation of HMGCR: initiates the sterol-mediated ubiquitin-mediated endoplasmic reticulum-associated degradation (ERAD) of HMGCR via recruitment of the reductase to the ubiquitin ligases AMFR/gp78 and/or RNF139. Also regulates degradation of SOAT2/ACAT2 when the lipid levels are low: initiates the ubiquitin-mediated degradation of SOAT2/ACAT2 via recruitment of the ubiquitin ligases AMFR/gp78. This is Insulin-induced gene 1 protein from Mus musculus (Mouse).